The primary structure comprises 300 residues: Ribosomal protein L11 methyltransferase (300 aa).

S-adenosyl-L-methionine is bound by residues Thr152, Gly173, Asp195, and Asn234.

Belongs to the methyltransferase superfamily. PrmA family.

The protein localises to the cytoplasm. The catalysed reaction is L-lysyl-[protein] + 3 S-adenosyl-L-methionine = N(6),N(6),N(6)-trimethyl-L-lysyl-[protein] + 3 S-adenosyl-L-homocysteine + 3 H(+). Its function is as follows. Methylates ribosomal protein L11. In Burkholderia pseudomallei (strain 1710b), this protein is Ribosomal protein L11 methyltransferase.